The following is a 398-amino-acid chain: 1-deoxy-D-xylulose 5-phosphate reductoisomerase (398 aa).

NADPH contacts are provided by threonine 11, glycine 12, serine 13, isoleucine 14, and asparagine 125. Lysine 126 is a binding site for 1-deoxy-D-xylulose 5-phosphate. Glutamate 127 lines the NADPH pocket. Aspartate 151 contacts Mn(2+). Positions 152, 153, 186, and 209 each coordinate 1-deoxy-D-xylulose 5-phosphate. Residue glutamate 153 participates in Mn(2+) binding. Position 215 (glycine 215) interacts with NADPH. 1-deoxy-D-xylulose 5-phosphate contacts are provided by serine 222, asparagine 227, lysine 228, and glutamate 231. Position 231 (glutamate 231) interacts with Mn(2+).

The protein belongs to the DXR family. Requires Mg(2+) as cofactor. The cofactor is Mn(2+).

The catalysed reaction is 2-C-methyl-D-erythritol 4-phosphate + NADP(+) = 1-deoxy-D-xylulose 5-phosphate + NADPH + H(+). It participates in isoprenoid biosynthesis; isopentenyl diphosphate biosynthesis via DXP pathway; isopentenyl diphosphate from 1-deoxy-D-xylulose 5-phosphate: step 1/6. Catalyzes the NADPH-dependent rearrangement and reduction of 1-deoxy-D-xylulose-5-phosphate (DXP) to 2-C-methyl-D-erythritol 4-phosphate (MEP). The sequence is that of 1-deoxy-D-xylulose 5-phosphate reductoisomerase from Acinetobacter baumannii (strain ATCC 17978 / DSM 105126 / CIP 53.77 / LMG 1025 / NCDC KC755 / 5377).